We begin with the raw amino-acid sequence, 158 residues long: S-ribosylhomocysteine lyase (158 aa).

Fe cation-binding residues include H56, H60, and C125.

Belongs to the LuxS family. As to quaternary structure, homodimer. It depends on Fe cation as a cofactor.

It catalyses the reaction S-(5-deoxy-D-ribos-5-yl)-L-homocysteine = (S)-4,5-dihydroxypentane-2,3-dione + L-homocysteine. Involved in the synthesis of autoinducer 2 (AI-2) which is secreted by bacteria and is used to communicate both the cell density and the metabolic potential of the environment. The regulation of gene expression in response to changes in cell density is called quorum sensing. Catalyzes the transformation of S-ribosylhomocysteine (RHC) to homocysteine (HC) and 4,5-dihydroxy-2,3-pentadione (DPD). The polypeptide is S-ribosylhomocysteine lyase (Leuconostoc citreum (strain KM20)).